Consider the following 241-residue polypeptide: Octanoyltransferase (241 aa).

The region spanning 43–228 is the BPL/LPL catalytic domain; that stretch reads AETPDEIWLV…CLTANLDGSP (186 aa). Residues 83 to 90, 159 to 161, and 172 to 174 contribute to the substrate site; these read RGGQITYH, ALG, and GVS. Residue Cys190 is the Acyl-thioester intermediate of the active site.

It belongs to the LipB family.

It localises to the cytoplasm. The enzyme catalyses octanoyl-[ACP] + L-lysyl-[protein] = N(6)-octanoyl-L-lysyl-[protein] + holo-[ACP] + H(+). It participates in protein modification; protein lipoylation via endogenous pathway; protein N(6)-(lipoyl)lysine from octanoyl-[acyl-carrier-protein]: step 1/2. Catalyzes the transfer of endogenously produced octanoic acid from octanoyl-acyl-carrier-protein onto the lipoyl domains of lipoate-dependent enzymes. Lipoyl-ACP can also act as a substrate although octanoyl-ACP is likely to be the physiological substrate. The chain is Octanoyltransferase from Paraburkholderia xenovorans (strain LB400).